Consider the following 254-residue polypeptide: uncharacterized protein (254 aa).

Residues 1–22 (MKRLKKIVLCISFLFLTIFIGG) form the signal peptide. A lipid anchor (N-palmitoyl cysteine) is attached at Cys23. The S-diacylglycerol cysteine moiety is linked to residue Cys23.

Belongs to the staphylococcal tandem lipoprotein family.

Its subcellular location is the cell membrane. This is an uncharacterized protein from Staphylococcus aureus (strain MSSA476).